The following is a 333-amino-acid chain: Eukaryotic translation initiation factor 3 subunit I (333 aa).

4 WD repeats span residues 8–47 (GHER…RLGT), 50–91 (GHTG…ALLK), 144–183 (CNDS…VLVN), and 186–225 (EHSR…HQKT). Thr-219 is modified (phosphothreonine). N6-acetyllysine is present on Lys-264. Lys-282 participates in a covalent cross-link: Glycyl lysine isopeptide (Lys-Gly) (interchain with G-Cter in ubiquitin). The stretch at 283-324 (GHFGPINSVAFHPDGKSYSSGGEDGYVRIHYFDPQYFEFEFE) is one WD 5 repeat. Tyr-308 carries the post-translational modification Phosphotyrosine.

This sequence belongs to the eIF-3 subunit I family. As to quaternary structure, component of the eukaryotic translation initiation factor 3 (eIF-3) complex, which is composed of 13 subunits: EIF3A, EIF3B, EIF3C, EIF3D, EIF3E, EIF3F, EIF3G, EIF3H, EIF3I, EIF3J, EIF3K, EIF3L and EIF3M. The eIF-3 complex appears to include 3 stable modules: module A is composed of EIF3A, EIF3B, EIF3G and EIF3I; module B is composed of EIF3F, EIF3H, and EIF3M; and module C is composed of EIF3C, EIF3D, EIF3E, EIF3K and EIF3L. EIF3C of module C binds EIF3B of module A and EIF3H of module B, thereby linking the three modules. EIF3J is a labile subunit that binds to the eIF-3 complex via EIF3B. The eIF-3 complex interacts with RPS6KB1 under conditions of nutrient depletion. Mitogenic stimulation leads to binding and activation of a complex composed of MTOR and RPTOR, leading to phosphorylation and release of RPS6KB1 and binding of EIF4B to eIF-3. Phosphorylated by TGF-beta type II receptor.

It is found in the cytoplasm. Functionally, component of the eukaryotic translation initiation factor 3 (eIF-3) complex, which is required for several steps in the initiation of protein synthesis. The eIF-3 complex associates with the 40S ribosome and facilitates the recruitment of eIF-1, eIF-1A, eIF-2:GTP:methionyl-tRNAi and eIF-5 to form the 43S pre-initiation complex (43S PIC). The eIF-3 complex stimulates mRNA recruitment to the 43S PIC and scanning of the mRNA for AUG recognition. The eIF-3 complex is also required for disassembly and recycling of post-termination ribosomal complexes and subsequently prevents premature joining of the 40S and 60S ribosomal subunits prior to initiation. The eIF-3 complex specifically targets and initiates translation of a subset of mRNAs involved in cell proliferation, including cell cycling, differentiation and apoptosis, and uses different modes of RNA stem-loop binding to exert either translational activation or repression. The sequence is that of Eukaryotic translation initiation factor 3 subunit I from Oryctolagus cuniculus (Rabbit).